Consider the following 343-residue polypeptide: KRR1 small subunit processome component homolog (343 aa).

One can recognise a KH domain in the interval 125–193 (DIIKIGNLVH…VRDIVVETMN (69 aa)). The span at 232–245 (NISKRKQPKVKKAK) shows a compositional bias: basic residues. Residues 232–343 (NISKRKQPKV…KLLKANKKKV (112 aa)) are disordered. The stretch at 270 to 302 (FLNKEQKQAKRQQERSAKQADAAKRQDERRNKD) forms a coiled coil. Residues 271–302 (LNKEQKQAKRQQERSAKQADAAKRQDERRNKD) are compositionally biased toward basic and acidic residues. Basic residues predominate over residues 331 to 343 (LKAKLLKANKKKV).

The protein belongs to the KRR1 family. In terms of assembly, monomer. Component of the ribosomal small subunit (SSU) processome.

The protein localises to the nucleus. The protein resides in the nucleolus. Its function is as follows. Required for 40S ribosome biogenesis. Involved in nucleolar processing of pre-18S ribosomal RNA and ribosome assembly. Binds to RNA. Required for female germline development, cell viability during eye development and for survival of dividing cells and epithelial cells during early wing disk development. The protein is KRR1 small subunit processome component homolog of Drosophila ananassae (Fruit fly).